Consider the following 387-residue polypeptide: S-adenosylmethionine synthase (387 aa).

His15 contributes to the ATP binding site. Residue Asp17 coordinates Mg(2+). Glu43 is a K(+) binding site. Glu56 and Gln99 together coordinate L-methionine. The tract at residues 99-109 (QSPDIAQGVNR) is flexible loop. ATP is bound by residues 166–168 (DAK), 232–233 (RF), Asp241, 247–248 (RK), Ala264, and Lys268. Asp241 contacts L-methionine. Residue Lys272 participates in L-methionine binding.

This sequence belongs to the AdoMet synthase family. In terms of assembly, homotetramer; dimer of dimers. Requires Mg(2+) as cofactor. K(+) serves as cofactor.

It is found in the cytoplasm. The enzyme catalyses L-methionine + ATP + H2O = S-adenosyl-L-methionine + phosphate + diphosphate. It functions in the pathway amino-acid biosynthesis; S-adenosyl-L-methionine biosynthesis; S-adenosyl-L-methionine from L-methionine: step 1/1. Catalyzes the formation of S-adenosylmethionine (AdoMet) from methionine and ATP. The overall synthetic reaction is composed of two sequential steps, AdoMet formation and the subsequent tripolyphosphate hydrolysis which occurs prior to release of AdoMet from the enzyme. In Nitrosomonas europaea (strain ATCC 19718 / CIP 103999 / KCTC 2705 / NBRC 14298), this protein is S-adenosylmethionine synthase.